A 420-amino-acid chain; its full sequence is Histidine--tRNA ligase (420 aa).

It belongs to the class-II aminoacyl-tRNA synthetase family. As to quaternary structure, homodimer.

The protein localises to the cytoplasm. It carries out the reaction tRNA(His) + L-histidine + ATP = L-histidyl-tRNA(His) + AMP + diphosphate + H(+). The polypeptide is Histidine--tRNA ligase (Mycobacterium marinum (strain ATCC BAA-535 / M)).